Here is an 87-residue protein sequence, read N- to C-terminus: Small ribosomal subunit protein bS16 (87 aa).

Belongs to the bacterial ribosomal protein bS16 family.

This chain is Small ribosomal subunit protein bS16, found in Desulfatibacillum aliphaticivorans.